The sequence spans 305 residues: UDP-3-O-acyl-N-acetylglucosamine deacetylase (305 aa).

Residues H78, H237, and D241 each coordinate Zn(2+). H264 acts as the Proton donor in catalysis.

The protein belongs to the LpxC family. Zn(2+) is required as a cofactor.

The catalysed reaction is a UDP-3-O-[(3R)-3-hydroxyacyl]-N-acetyl-alpha-D-glucosamine + H2O = a UDP-3-O-[(3R)-3-hydroxyacyl]-alpha-D-glucosamine + acetate. Its pathway is glycolipid biosynthesis; lipid IV(A) biosynthesis; lipid IV(A) from (3R)-3-hydroxytetradecanoyl-[acyl-carrier-protein] and UDP-N-acetyl-alpha-D-glucosamine: step 2/6. Its function is as follows. Catalyzes the hydrolysis of UDP-3-O-myristoyl-N-acetylglucosamine to form UDP-3-O-myristoylglucosamine and acetate, the committed step in lipid A biosynthesis. In Burkholderia multivorans (strain ATCC 17616 / 249), this protein is UDP-3-O-acyl-N-acetylglucosamine deacetylase.